The primary structure comprises 584 residues: HERV-H_2q24.3 provirus ancestral Env polyprotein (584 aa).

The N-terminal stretch at 1-35 is a signal peptide; the sequence is MIFAGKAPSNTSTLMKFYSLLLYSLLFSFPFLCHP. At 36–523 the chain is on the extracellular side; sequence LPLPSYLHHT…WALSNWMSWV (488 aa). Asparagine 47 is a glycosylation site (N-linked (GlcNAc...) asparagine). The CXXC motif lies at 64 to 67; it reads CWLC. 6 N-linked (GlcNAc...) asparagine glycosylation sites follow: asparagine 199, asparagine 222, asparagine 265, asparagine 283, asparagine 352, and asparagine 370. The fusion peptide stretch occupies residues 388–408; it reads VIPLIPLMVGLGLSASTVALG. Positions 454-470 match the CKS-17 motif; sequence LQNRRGLDLLTAEKGGL. Residues cysteine 471 and cysteine 478 are joined by a disulfide bond. The CX6CC signature appears at 471 to 479; sequence CIFLNEECC. An N-linked (GlcNAc...) asparagine glycan is attached at asparagine 483. Residues 524–544 traverse the membrane as a helical segment; that stretch reads LPIVSPLIPIFLLLLFGPCIF. The Cytoplasmic portion of the chain corresponds to 545-584; sequence RLVSQFIQNRIQAITNHSIRQMFLLTSPQYHPLPQDLPSA.

It belongs to the gamma type-C retroviral envelope protein family. HERV class-I H env subfamily. As to quaternary structure, the surface (SU) and transmembrane (TM) proteins form a heterodimer. SU and TM are attached by noncovalent interactions or by a labile interchain disulfide bond. Post-translationally, specific enzymatic cleavages in vivo yield the mature SU and TM proteins. In terms of processing, the CXXC motif is highly conserved across a broad range of retroviral envelope proteins. It is thought to participate in the formation of a labile disulfide bond possibly with the CX6CC motif present in the transmembrane protein. Isomerization of the intersubunit disulfide bond to an SU intrachain disulfide bond is thought to occur upon receptor recognition in order to allow membrane fusion. In terms of tissue distribution, low expression in skin and testis. No expression in several cell lines.

Its subcellular location is the virion. It localises to the cell membrane. Functionally, retroviral envelope proteins mediate receptor recognition and membrane fusion during early infection. Endogenous envelope proteins may have kept, lost or modified their original function during evolution. This endogenous envelope protein has lost its original fusogenic properties but has immunosuppressive properties in vivo. SU mediates receptor recognition. Its function is as follows. TM anchors the envelope heterodimer to the viral membrane through one transmembrane domain. The other hydrophobic domain, called fusion peptide, mediates fusion of the viral membrane with the target cell membrane. In Homo sapiens (Human), this protein is HERV-H_2q24.3 provirus ancestral Env polyprotein.